We begin with the raw amino-acid sequence, 415 residues long: Phosphoglycerate kinase (415 aa).

(2R)-3-phosphoglycerate contacts are provided by Val-23, Asp-24, Phe-25, Asn-26, Gln-39, Arg-40, Ser-63, His-64, Gly-66, Arg-67, Leu-122, Arg-123, and Arg-170. Gly-213 is an ADP binding site. Gly-213 is a CDP binding site. AMP contacts are provided by Ala-214 and Lys-215. Ala-214 is an ATP binding site. Ala-214 lines the Mg(2+) pocket. Asp-218 is a binding site for CDP. Asp-218 contributes to the Mg(2+) binding site. Lys-219 provides a ligand contact to AMP. Residue Lys-219 coordinates ATP. Gly-237 provides a ligand contact to ADP. Position 237 (Gly-237) interacts with CDP. Residues Gly-238 and Gly-311 each coordinate AMP. ATP contacts are provided by Gly-238 and Gly-311. Residues Gly-336 and Phe-341 each coordinate CDP. Phe-341 serves as a coordination point for ADP. Glu-342 provides a ligand contact to AMP. The ATP site is built by Glu-342, Asp-373, and Thr-374. Asp-373 serves as a coordination point for Mg(2+).

Belongs to the phosphoglycerate kinase family. In terms of assembly, monomer. The cofactor is Mg(2+).

Its subcellular location is the cytoplasm. The protein resides in the mitochondrion. The catalysed reaction is (2R)-3-phosphoglycerate + ATP = (2R)-3-phospho-glyceroyl phosphate + ADP. Its pathway is carbohydrate degradation; glycolysis; pyruvate from D-glyceraldehyde 3-phosphate: step 2/5. Functionally, catalyzes one of the two ATP producing reactions in the glycolytic pathway via the reversible conversion of 1,3-diphosphoglycerate to 3-phosphoglycerate. Both L- and D- forms of purine and pyrimidine nucleotides can be used as substrates, but the activity is much lower on pyrimidines. Negatively regulates the biosynthesis of acetyl-CoA from pyruvate in the mitochondrion. The sequence is that of Phosphoglycerate kinase (PGKA) from Penicillium chrysogenum (Penicillium notatum).